We begin with the raw amino-acid sequence, 229 residues long: Cytidylate kinase (229 aa).

12–20 serves as a coordination point for ATP; it reads GPSGVGKST.

The protein belongs to the cytidylate kinase family. Type 1 subfamily.

It localises to the cytoplasm. The catalysed reaction is CMP + ATP = CDP + ADP. It catalyses the reaction dCMP + ATP = dCDP + ADP. The sequence is that of Cytidylate kinase from Mesomycoplasma hyopneumoniae (strain 232) (Mycoplasma hyopneumoniae).